Here is a 155-residue protein sequence, read N- to C-terminus: NADPH-dependent 7-cyano-7-deazaguanine reductase (155 aa).

Cysteine 53 functions as the Thioimide intermediate in the catalytic mechanism. Aspartate 60 serves as the catalytic Proton donor. Substrate-binding positions include 75–77 and 94–95; these read VES and HE.

The protein belongs to the GTP cyclohydrolase I family. QueF type 1 subfamily.

It localises to the cytoplasm. It carries out the reaction 7-aminomethyl-7-carbaguanine + 2 NADP(+) = 7-cyano-7-deazaguanine + 2 NADPH + 3 H(+). The protein operates within tRNA modification; tRNA-queuosine biosynthesis. Its function is as follows. Catalyzes the NADPH-dependent reduction of 7-cyano-7-deazaguanine (preQ0) to 7-aminomethyl-7-deazaguanine (preQ1). This Ruegeria pomeroyi (strain ATCC 700808 / DSM 15171 / DSS-3) (Silicibacter pomeroyi) protein is NADPH-dependent 7-cyano-7-deazaguanine reductase.